The sequence spans 125 residues: Holo-[acyl-carrier-protein] synthase (125 aa).

Mg(2+) is bound by residues Asp-8 and Glu-55.

Belongs to the P-Pant transferase superfamily. AcpS family. Mg(2+) is required as a cofactor.

The protein localises to the cytoplasm. The catalysed reaction is apo-[ACP] + CoA = holo-[ACP] + adenosine 3',5'-bisphosphate + H(+). In terms of biological role, transfers the 4'-phosphopantetheine moiety from coenzyme A to a Ser of acyl-carrier-protein. This chain is Holo-[acyl-carrier-protein] synthase, found in Treponema pallidum (strain Nichols).